The following is a 548-amino-acid chain: Chaperonin GroEL 2 (548 aa).

ATP-binding positions include 30–33 (TLGP), Lys51, 87–91 (DGTTT), Gly415, and Asp496. A disordered region spans residues 529–548 (KDAMPSPDMGGMGGMGGMGF). The span at 538-548 (GGMGGMGGMGF) shows a compositional bias: gly residues.

It belongs to the chaperonin (HSP60) family. Forms a cylinder of 14 subunits composed of two heptameric rings stacked back-to-back. Interacts with the co-chaperonin GroES.

Its subcellular location is the cytoplasm. The enzyme catalyses ATP + H2O + a folded polypeptide = ADP + phosphate + an unfolded polypeptide.. In terms of biological role, together with its co-chaperonin GroES, plays an essential role in assisting protein folding. The GroEL-GroES system forms a nano-cage that allows encapsulation of the non-native substrate proteins and provides a physical environment optimized to promote and accelerate protein folding. This Rhodospirillum rubrum (strain ATCC 11170 / ATH 1.1.1 / DSM 467 / LMG 4362 / NCIMB 8255 / S1) protein is Chaperonin GroEL 2.